Consider the following 364-residue polypeptide: Capsular polysaccharide phosphotransferase fcs1 (364 aa).

Belongs to the stealth family.

Functionally, part of a group II capsule biosynthesis locus. This Haemophilus influenzae protein is Capsular polysaccharide phosphotransferase fcs1 (fcs1).